The chain runs to 592 residues: Frizzled-9 (592 aa).

A signal peptide spans 1–23 (MAVPPLLRGALLLWQLLATGGAA). Topologically, residues 24–230 (LEIGRFDPER…EVFWSRRDKD (207 aa)) are extracellular. One can recognise an FZ domain in the interval 35-156 (RGPAPCQAME…NDPHALCMEA (122 aa)). Disulfide bonds link Cys40/Cys101, Cys48/Cys94, Cys85/Cys123, Cys112/Cys153, and Cys116/Cys140. The interval 59 to 173 (PNLLGHTSQG…PTEPHKGLGM (115 aa)) is required for Wnt-activated receptor activity. The chain crosses the membrane as a helical span at residues 231 to 251 (FALVWMAVWSALCFFSTAFTV). Residues 252–267 (FTFLLEPHRFQYPERP) lie on the Cytoplasmic side of the membrane. A helical membrane pass occupies residues 268-288 (IIFLSMCYNVYSLAFLIRAVA). Topologically, residues 289-314 (GAQSVACDQEAGALYVIQEGLENTGC) are extracellular. The chain crosses the membrane as a helical span at residues 315–335 (TLVFLLLYYFGMASSLWWVVL). The Cytoplasmic segment spans residues 336–356 (TLTWFLAAGKKWGHEAIEAHG). The helical transmembrane segment at 357-377 (SYFHMAAWGLPALKTIVVLTL) threads the bilayer. The Extracellular portion of the chain corresponds to 378 to 401 (RKVAGDELTGLCYVASMDPAALTG). Residues 402 to 422 (FVLVPLSCYLVLGTSFLLTGF) form a helical membrane-spanning segment. Residues 423–448 (VALFHIRKIMKTGGTNTEKLEKLMVK) lie on the Cytoplasmic side of the membrane. A helical transmembrane segment spans residues 449–469 (IGVFSILYTVPATCVIVCYVY). The Extracellular segment spans residues 470 to 509 (ERLNMDFWRLRATEQPCTAAAVPGGRRDCSLPGGSVPTVA). A helical membrane pass occupies residues 510 to 530 (VFMLKIFMSLVVGITSGVWVW). The Cytoplasmic segment spans residues 531 to 592 (SSKTFQTWQS…DPSLENPTHL (62 aa)). The Lys-Thr-X-X-X-Trp motif, mediates interaction with the PDZ domain of Dvl family members motif lies at 533-538 (KTFQTW). The tract at residues 555-592 (ACRTPGGYGRGTHCHYKAPTVVLHMTKTDPSLENPTHL) is required for CTNNB1 accumulation and TCF transcription factor activity.

It belongs to the G-protein coupled receptor Fz/Smo family. Ubiquitinated by ZNRF3, leading to its degradation by the proteasome.

Its subcellular location is the cell membrane. Its function is as follows. Receptor for WNT2 that is coupled to the beta-catenin canonical signaling pathway, which leads to the activation of disheveled proteins, inhibition of GSK-3 kinase, nuclear accumulation of beta-catenin and activation of Wnt target genes. Plays a role in neuromuscular junction (NMJ) assembly by negatively regulating the clustering of acetylcholine receptors (AChR) through the beta-catenin canonical signaling pathway. May play a role in neural progenitor cells (NPCs) viability through the beta-catenin canonical signaling pathway by negatively regulating cell cycle arrest leading to inhibition of neuron apoptotic process. During hippocampal development, regulates neuroblast proliferation and apoptotic cell death. Controls bone formation through non canonical Wnt signaling mediated via ISG15. Positively regulates bone regeneration through non canonical Wnt signaling. This chain is Frizzled-9, found in Rattus norvegicus (Rat).